The following is a 177-amino-acid chain: R-phycoerythrin beta chain (177 aa).

Positions 50 and 61 each coordinate phycourobilin. The residue at position 72 (N72) is an N4-methylasparagine. (2R,3E)-phycoerythrobilin-binding residues include C82 and C158.

The protein belongs to the phycobiliprotein family. In terms of assembly, heterodimer of an alpha and a beta chain. In terms of processing, contains two covalently linked phycoerythrobilin chromophores and one covalently linked phycourobilin chromophore.

It localises to the plastid. Its subcellular location is the chloroplast thylakoid membrane. In terms of biological role, light-harvesting photosynthetic bile pigment-protein from the phycobiliprotein complex. This Lophosiphonia boldii (Red alga) protein is R-phycoerythrin beta chain (cpeB).